A 141-amino-acid chain; its full sequence is Large ribosomal subunit protein uL11 (141 aa).

It belongs to the universal ribosomal protein uL11 family. As to quaternary structure, part of the ribosomal stalk of the 50S ribosomal subunit. Interacts with L10 and the large rRNA to form the base of the stalk. L10 forms an elongated spine to which L12 dimers bind in a sequential fashion forming a multimeric L10(L12)X complex. One or more lysine residues are methylated.

Its function is as follows. Forms part of the ribosomal stalk which helps the ribosome interact with GTP-bound translation factors. In Synechococcus sp. (strain CC9605), this protein is Large ribosomal subunit protein uL11.